The following is a 263-amino-acid chain: 4-hydroxy-tetrahydrodipicolinate reductase (263 aa).

Residues 8–13, D34, 99–101, and 125–128 contribute to the NAD(+) site; these read GASGRM, GTT, and SPNY. The active-site Proton donor/acceptor is the H157. H158 is a (S)-2,3,4,5-tetrahydrodipicolinate binding site. K161 (proton donor) is an active-site residue. 167–168 lines the (S)-2,3,4,5-tetrahydrodipicolinate pocket; sequence GT.

This sequence belongs to the DapB family.

The protein localises to the cytoplasm. It catalyses the reaction (S)-2,3,4,5-tetrahydrodipicolinate + NAD(+) + H2O = (2S,4S)-4-hydroxy-2,3,4,5-tetrahydrodipicolinate + NADH + H(+). The enzyme catalyses (S)-2,3,4,5-tetrahydrodipicolinate + NADP(+) + H2O = (2S,4S)-4-hydroxy-2,3,4,5-tetrahydrodipicolinate + NADPH + H(+). It participates in amino-acid biosynthesis; L-lysine biosynthesis via DAP pathway; (S)-tetrahydrodipicolinate from L-aspartate: step 4/4. Catalyzes the conversion of 4-hydroxy-tetrahydrodipicolinate (HTPA) to tetrahydrodipicolinate. The chain is 4-hydroxy-tetrahydrodipicolinate reductase from Methanococcoides burtonii (strain DSM 6242 / NBRC 107633 / OCM 468 / ACE-M).